A 605-amino-acid chain; its full sequence is Microtubule-associated protein VP10 (605 aa).

As to quaternary structure, interacts with VP1.

Its subcellular location is the virion. It is found in the host cytoplasm. The protein resides in the host cytoskeleton. Functionally, minor inner capsid component. Displays NTPase and RNA 5'-triphosphatase (RTPase) activities. May function as a cofactor of polymerase VP1. Associates with microtubules and plays a role in the formation, structural organization and morphology of viral inclusions, where the assembly of cores and the replication of viral RNA occur. This Colorado tick fever virus (strain USA/Florio N-7180) (CTFV) protein is Microtubule-associated protein VP10.